The sequence spans 301 residues: Acetylglutamate kinase (301 aa).

Substrate is bound by residues 68 to 69, Arg90, and Asn195; that span reads GG.

It belongs to the acetylglutamate kinase family. ArgB subfamily.

It is found in the cytoplasm. The enzyme catalyses N-acetyl-L-glutamate + ATP = N-acetyl-L-glutamyl 5-phosphate + ADP. Its pathway is amino-acid biosynthesis; L-arginine biosynthesis; N(2)-acetyl-L-ornithine from L-glutamate: step 2/4. Its function is as follows. Catalyzes the ATP-dependent phosphorylation of N-acetyl-L-glutamate. This chain is Acetylglutamate kinase, found in Pseudomonas putida (strain W619).